The sequence spans 283 residues: Elongation factor Ts (283 aa).

The tract at residues 80–83 (TDFV) is involved in Mg(2+) ion dislocation from EF-Tu.

This sequence belongs to the EF-Ts family.

Its subcellular location is the cytoplasm. In terms of biological role, associates with the EF-Tu.GDP complex and induces the exchange of GDP to GTP. It remains bound to the aminoacyl-tRNA.EF-Tu.GTP complex up to the GTP hydrolysis stage on the ribosome. The chain is Elongation factor Ts from Pectobacterium atrosepticum (strain SCRI 1043 / ATCC BAA-672) (Erwinia carotovora subsp. atroseptica).